The chain runs to 328 residues: Diacetylchitobiose uptake system permease protein DasB (328 aa).

The disordered stretch occupies residues 1 to 27 (MTVQTERPPSGPSDVRKADGGGTGGTR). A run of 6 helical transmembrane segments spans residues 36–56 (ALAP…LLGW), 104–124 (IIFT…IGLL), 134–154 (FVLM…ATTV), 188–208 (FSTF…FVAI), 247–267 (FLYA…VQVY), and 297–317 (MGAA…AYYL). In terms of domain architecture, ABC transmembrane type-1 spans 100–316 (TVRSIIFTAV…LILLGLTAYY (217 aa)).

Belongs to the binding-protein-dependent transport system permease family. The complex is composed of two ATP-binding proteins (MsiK), two transmembrane proteins (DasB and DasC) and a solute-binding protein (DasA).

It is found in the cell membrane. In terms of biological role, part of the ABC transporter complex DasABC-MsiK involved in N,N'-diacetylchitobiose ((GlcNAc)2) uptake. Responsible for the translocation of the substrate across the membrane. This chain is Diacetylchitobiose uptake system permease protein DasB, found in Streptomyces coelicolor (strain ATCC BAA-471 / A3(2) / M145).